Reading from the N-terminus, the 384-residue chain is 23S rRNA (uracil(747)-C(5))-methyltransferase RlmC (384 aa).

Residues Cys7, Cys15, Cys18, and Cys94 each contribute to the [4Fe-4S] cluster site. Positions 219, 248, 269, and 316 each coordinate S-adenosyl-L-methionine. Catalysis depends on Cys343, which acts as the Nucleophile.

The protein belongs to the class I-like SAM-binding methyltransferase superfamily. RNA M5U methyltransferase family. RlmC subfamily.

The catalysed reaction is uridine(747) in 23S rRNA + S-adenosyl-L-methionine = 5-methyluridine(747) in 23S rRNA + S-adenosyl-L-homocysteine + H(+). Its function is as follows. Catalyzes the formation of 5-methyl-uridine at position 747 (m5U747) in 23S rRNA. This chain is 23S rRNA (uracil(747)-C(5))-methyltransferase RlmC, found in Shewanella sp. (strain MR-4).